The primary structure comprises 1227 residues: RNA-binding protein 20 (1227 aa).

2 disordered regions span residues 1–58 (MVLA…QAGL) and 289–374 (GSHV…SKQG). The span at 27–42 (PGARASPAPSGPRGMQ) shows a compositional bias: low complexity. Residues 43-56 (QPPPPPQPPPPPQA) are compositionally biased toward pro residues. The span at 313-331 (QGTNSQWESPHGFSGQSKP) shows a compositional bias: polar residues. The segment at 409–443 (HLPHICSICDKKVFDLKDWELHVKGKLHAQKCLVF) adopts a U1-type zinc-finger fold. Ser498 is modified (phosphoserine). Positions 518–593 (RVVHICNLPE…EKLLIRMSKR (76 aa)) constitute an RRM domain. Basic and acidic residues predominate over residues 624–634 (EADRYGPERPR). 2 disordered regions span residues 624–906 (EADR…TNME) and 977–1089 (SLKS…ASPP). Residues 628–655 (YGPERPRSRSPVSRSLSPRSHTPSFTSC) are RS. Phosphoserine occurs at positions 635, 637, 640, 642, 660, and 679. Residues 636 to 660 (RSPVSRSLSPRSHTPSFTSCSSSHS) are compositionally biased toward low complexity. 2 stretches are compositionally biased toward basic and acidic residues: residues 674-709 (DSWE…PWAH) and 716-738 (RQLD…EKYP). Polar residues predominate over residues 741-752 (GSPNLPHSVSSY). Ser742 carries the post-translational modification Phosphoserine. Basic and acidic residues-rich tracts occupy residues 753-772 (KSRE…DKYL), 784-807 (RKDE…EDGL), and 816-856 (EGAK…KEEQ). The residue at position 801 (Ser801) is a Phosphoserine. 7 positions are modified to phosphoserine: Ser865, Ser876, Ser891, Ser893, Ser977, Ser980, and Ser1013. Residues 868–888 (RQEKEAEFSDPENTRTKKEQD) show a composition bias toward basic and acidic residues. Over residues 1024-1036 (CYEKEAKGVESSD) the composition is skewed to basic and acidic residues. Phosphoserine is present on residues Ser1048, Ser1060, Ser1080, Ser1115, and Ser1120. Residues 1161–1192 (FYCKLCGLFYTSEETAKMSHCRSAVHYRNLQK) form a Matrin-type zinc finger. Basic and acidic residues predominate over residues 1201–1215 (GLKETEGADSPRPED). Residues 1201–1227 (GLKETEGADSPRPEDSGIVPRFERKKL) form a disordered region. Position 1210 is a phosphoserine (Ser1210).

As to quaternary structure, associates with components of the U1 and U2 U1 small nuclear ribonucleoprotein complexes. In terms of processing, phosphorylation regulates the subcellular localization. Phosphorylation of Ser-635 and Ser-637 in the RS (arginine/serine-rich) region promotes nuclear localization of the protein. In contrast, phosphorylation of the C-terminal disordered region promotes localization to cytoplasmic ribonucleoprotein granules. In terms of tissue distribution, mainly expressed in the heart. Also expressed in skeletal muscle tissues, ovary, small intestine and colon.

The protein localises to the nucleus. Its subcellular location is the cytoplasm. It localises to the cytoplasmic ribonucleoprotein granule. Its function is as follows. RNA-binding protein that acts as a regulator of mRNA splicing of a subset of genes encoding key structural proteins involved in cardiac development, such as TTN (Titin), CACNA1C, CAMK2D or PDLIM5/ENH. Acts as a repressor of mRNA splicing: specifically binds the 5'UCUU-3' motif that is predominantly found within intronic sequences of pre-mRNAs, leading to the exclusion of specific exons in target transcripts. RBM20-mediated exon skipping is hormone-dependent and is essential for TTN isoform transition in both cardiac and skeletal muscles. RBM20-mediated exon skipping of TTN provides substrates for the formation of circular RNA (circRNAs) from the TTN transcripts. Together with RBM24, promotes the expression of short isoforms of PDLIM5/ENH in cardiomyocytes. This Homo sapiens (Human) protein is RNA-binding protein 20.